Here is a 416-residue protein sequence, read N- to C-terminus: 4-hydroxy-3-methylbut-2-en-1-yl diphosphate synthase (flavodoxin) (416 aa).

Cys-304, Cys-307, Cys-350, and Glu-357 together coordinate [4Fe-4S] cluster.

This sequence belongs to the IspG family. The cofactor is [4Fe-4S] cluster.

It catalyses the reaction (2E)-4-hydroxy-3-methylbut-2-enyl diphosphate + oxidized [flavodoxin] + H2O + 2 H(+) = 2-C-methyl-D-erythritol 2,4-cyclic diphosphate + reduced [flavodoxin]. It functions in the pathway isoprenoid biosynthesis; isopentenyl diphosphate biosynthesis via DXP pathway; isopentenyl diphosphate from 1-deoxy-D-xylulose 5-phosphate: step 5/6. In terms of biological role, converts 2C-methyl-D-erythritol 2,4-cyclodiphosphate (ME-2,4cPP) into 1-hydroxy-2-methyl-2-(E)-butenyl 4-diphosphate. This is 4-hydroxy-3-methylbut-2-en-1-yl diphosphate synthase (flavodoxin) from Burkholderia pseudomallei (strain K96243).